Consider the following 425-residue polypeptide: Histidine--tRNA ligase 2 (425 aa).

Belongs to the class-II aminoacyl-tRNA synthetase family. As to quaternary structure, homodimer.

It localises to the cytoplasm. The enzyme catalyses tRNA(His) + L-histidine + ATP = L-histidyl-tRNA(His) + AMP + diphosphate + H(+). This Shouchella clausii (strain KSM-K16) (Alkalihalobacillus clausii) protein is Histidine--tRNA ligase 2.